We begin with the raw amino-acid sequence, 302 residues long: MIFPNIDPVVHIGPWALQFGPLALRWYALAYVAGILLGWRYALRLTRTASVWGARTPTATALQIDDLVLWITLGIIVGGRLGYFVFYMLMNDDQRAWLAAHPMDVFKIWEGGMSFHGGFLGVCAAIILFARQQKIDMLRLGDLIAPVAPIGIFFGRIANFINGELWGRVTDGPFGIIFCNETIQANHPQRICPAGPLPRHPSQLYEAALEGLVLFLILAFAIYRLKWLRRRGALVATFLLGYGLARLALENVRNPDVGMPEFPLGLTMGMMLSIPMILAGGWLLWKSLKEPIRDDAEAHEPA.

Helical transmembrane passes span 19–39 (FGPLALRWYALAYVAGILLGW), 67–87 (LVLWITLGIIVGGRLGYFVFY), 108–128 (IWEGGMSFHGGFLGVCAAIIL), 143–163 (LIAPVAPIGIFFGRIANFING), 203–223 (QLYEAALEGLVLFLILAFAIY), 232–252 (GALVATFLLGYGLARLALENV), and 264–284 (LGLTMGMMLSIPMILAGGWLL). A 1,2-diacyl-sn-glycero-3-phospho-(1'-sn-glycerol) is bound at residue Arg-156.

It belongs to the Lgt family.

The protein localises to the cell inner membrane. It catalyses the reaction L-cysteinyl-[prolipoprotein] + a 1,2-diacyl-sn-glycero-3-phospho-(1'-sn-glycerol) = an S-1,2-diacyl-sn-glyceryl-L-cysteinyl-[prolipoprotein] + sn-glycerol 1-phosphate + H(+). The protein operates within protein modification; lipoprotein biosynthesis (diacylglyceryl transfer). Functionally, catalyzes the transfer of the diacylglyceryl group from phosphatidylglycerol to the sulfhydryl group of the N-terminal cysteine of a prolipoprotein, the first step in the formation of mature lipoproteins. In Caulobacter vibrioides (strain ATCC 19089 / CIP 103742 / CB 15) (Caulobacter crescentus), this protein is Phosphatidylglycerol--prolipoprotein diacylglyceryl transferase.